The chain runs to 508 residues: DEAD-box ATP-dependent RNA helicase 8 (508 aa).

The disordered stretch occupies residues 1–123 (MDPRARYPPG…LKLPPQDTRY (123 aa)). A compositionally biased stretch (low complexity) spans 18–53 (NPNYYNRGPPLQQQHNHHQQQQTSAPHHQQYVQRQP). A compositionally biased stretch (basic residues) spans 54 to 64 (QQHHHHNHHQQ). The short motif at 134-162 (NEFEDYFLKRELLMGIYEKGFERPSPIQE) is the Q motif element. Residues 165–335 (IPIALTGSDI…DKYLPKPYVI (171 aa)) form the Helicase ATP-binding domain. ATP is bound at residue 178–185 (AKNGTGKT). A DEAD box motif is present at residues 283-286 (DEAD). A Helicase C-terminal domain is found at 345–505 (GITQFYAFVE…PIPPQIDQAI (161 aa)).

The protein belongs to the DEAD box helicase family. DDX6/DHH1 subfamily.

The protein resides in the cytoplasm. The protein localises to the P-body. The catalysed reaction is ATP + H2O = ADP + phosphate + H(+). Its function is as follows. ATP-dependent RNA helicase involved in mRNA turnover, and more specifically in mRNA decapping. This chain is DEAD-box ATP-dependent RNA helicase 8, found in Oryza sativa subsp. japonica (Rice).